The following is a 398-amino-acid chain: MGEMLNENTSSTSLSSFYVLENETIFNVQEEMEEDGSESGNIQKTLLEDPCPENVNDENEDEQNRSSRSSSPLVKHEQRHRMYNLKEVIKSFILTKSKEKPCDLEMGIDSIEMGRMQSFESDQQESHTGQANFPTDQEDPRNPQLDSQYEAFITQGESQTDKKKTSTVQEEELQNAGKKLETVQENPQAYSKVTQQEPQAGQKAVPQEPQANQQETSSNQEESSFDRQETQDDKQKPKTTQQEHYNLRNRNQATITNSNSKPQTRRSKIFVISLLGYGVYLLAFLDLIEYVSKEYGFEATVSAQIFLWCLFGVLMIARGLIYLALFRNFLNILKRMAIYCGACFWVYACIFFLTRVFCFLIDTPYPQFEKIPLEIYSIFAAINVYIIELGAIYCTSGR.

Disordered stretches follow at residues 30–81 (EEME…QRHR) and 119–260 (FESD…NSNS). Polar residues-rich tracts occupy residues 119-135 (FESD…NFPT) and 183-199 (VQEN…QEPQ). Over residues 210–222 (QANQQETSSNQEE) the composition is skewed to low complexity. Positions 224–236 (SFDRQETQDDKQK) are enriched in basic and acidic residues. The segment covering 248-260 (RNRNQATITNSNS) has biased composition (polar residues). 4 helical membrane passes run 269–289 (IFVI…DLIE), 305–325 (IFLW…YLAL), 341–361 (GACF…CFLI), and 373–393 (LEIY…GAIY).

It is found in the membrane. Has a role in meiosis. The protein is Meiotically up-regulated gene 126 protein (mug126) of Schizosaccharomyces pombe (strain 972 / ATCC 24843) (Fission yeast).